A 586-amino-acid polypeptide reads, in one-letter code: MATSGVEKSSKKKTEKKLAAREEAKLLAGFMGVMNNMRKQRTLCDVILMVQERKIPAHRVVLAAASHFFNLMFTTNMLESKSFEVELKDAEPDIIEQLVEFAYTARISVNSNNVQSLLDAANQYQIEPVKKMCVDFLKEQVDASNCLGISVLAECLDCPELKSTADDFIHQHFTEVYKTDEFLQLDVKRVTHLLSQDTLTVRAEDQVYDAAVRWLKYDEPNRQPFMVDILAKVRFPLISKNFLSKTVQAEPLIQDNPECLKMVISGMRYHLLSPEDREELAGGTRPRRKKHDYRIALFGGSQPQSCRYFNPKDYSWTDIRCPFEKRRDAACVFWDNVVYILGGSQLFPIKRMDCYNVVKDSWYSKLGPPTPRDSLAACAAEGKIYTSGGSEVGNSALYLFECYDTRTESWHTKPSMLTQRCSHGMVEANGLIYVCGGSLGNNVSGRVLSSCEVYDPATETWTELCSMIEPRKNHGLVFVKDKIFAVGGQNGLGGLDNVEYYDIKLNEWKMVSPMPWRGVTVKCAAVGSVIYVLAGFQGVGRLGHILEYNTETDKWVANSKVRAFPVTSCLICVVDTCGANEETLET.

The 68-residue stretch at 44–111 folds into the BTB domain; sequence CDVILMVQER…AYTARISVNS (68 aa). In terms of domain architecture, BACK spans 146–248; sequence CLGISVLAEC…SKNFLSKTVQ (103 aa). 6 Kelch repeats span residues 294–336, 337–382, 383–430, 431–481, 483–528, and 530–575; these read RIAL…FWDN, VVYI…AAEG, KIYT…EANG, LIYV…FVKD, IFAV…AVGS, and IYVL…CVVD.

As to quaternary structure, homodimer. Component of the BCR(KLHL7) E3 ubiquitin ligase complex, at least composed of CUL3 and KLHL7 and RBX1.

Its subcellular location is the nucleus. It is found in the cytoplasm. The protein operates within protein modification; protein ubiquitination. In terms of biological role, substrate-specific adapter of a BCR (BTB-CUL3-RBX1) E3 ubiquitin ligase complex. The BCR(KLHL7) complex acts by mediating ubiquitination and subsequent degradation of substrate proteins. Probably mediates 'Lys-48'-linked ubiquitination. The chain is Kelch-like protein 7 (Klhl7) from Rattus norvegicus (Rat).